The chain runs to 401 residues: Bifunctional enzyme IspD/IspF (401 aa).

Residues 1–234 (MQKPPRTAAI…SRLTAALGDI (234 aa)) form a 2-C-methyl-D-erythritol 4-phosphate cytidylyltransferase region. The interval 235-401 (RTGTGYDVHA…SPWGAEGQAS (167 aa)) is 2-C-methyl-D-erythritol 2,4-cyclodiphosphate synthase. A divalent metal cation is bound by residues Asp241 and His243. Residues 241–243 (DVH) and 267–268 (HS) each bind 4-CDP-2-C-methyl-D-erythritol 2-phosphate. Residue His275 coordinates a divalent metal cation. 4-CDP-2-C-methyl-D-erythritol 2-phosphate is bound by residues 289 to 291 (DIG), 365 to 368 (TTSE), Phe372, and Arg375.

In the N-terminal section; belongs to the IspD/TarI cytidylyltransferase family. IspD subfamily. This sequence in the C-terminal section; belongs to the IspF family. Requires a divalent metal cation as cofactor.

It carries out the reaction 2-C-methyl-D-erythritol 4-phosphate + CTP + H(+) = 4-CDP-2-C-methyl-D-erythritol + diphosphate. The enzyme catalyses 4-CDP-2-C-methyl-D-erythritol 2-phosphate = 2-C-methyl-D-erythritol 2,4-cyclic diphosphate + CMP. It functions in the pathway isoprenoid biosynthesis; isopentenyl diphosphate biosynthesis via DXP pathway; isopentenyl diphosphate from 1-deoxy-D-xylulose 5-phosphate: step 2/6. Its pathway is isoprenoid biosynthesis; isopentenyl diphosphate biosynthesis via DXP pathway; isopentenyl diphosphate from 1-deoxy-D-xylulose 5-phosphate: step 4/6. Functionally, bifunctional enzyme that catalyzes the formation of 4-diphosphocytidyl-2-C-methyl-D-erythritol from CTP and 2-C-methyl-D-erythritol 4-phosphate (MEP) (IspD), and catalyzes the conversion of 4-diphosphocytidyl-2-C-methyl-D-erythritol 2-phosphate (CDP-ME2P) to 2-C-methyl-D-erythritol 2,4-cyclodiphosphate (ME-CPP) with a corresponding release of cytidine 5-monophosphate (CMP) (IspF). This Rhodopseudomonas palustris (strain HaA2) protein is Bifunctional enzyme IspD/IspF.